The sequence spans 72 residues: DNA-directed RNA polymerase subunit Rpo10 (72 aa).

Positions 7, 10, 53, and 54 each coordinate Zn(2+).

It belongs to the archaeal Rpo10/eukaryotic RPB10 RNA polymerase subunit family. As to quaternary structure, part of the RNA polymerase complex. It depends on Zn(2+) as a cofactor.

Its subcellular location is the cytoplasm. The catalysed reaction is RNA(n) + a ribonucleoside 5'-triphosphate = RNA(n+1) + diphosphate. In terms of biological role, DNA-dependent RNA polymerase (RNAP) catalyzes the transcription of DNA into RNA using the four ribonucleoside triphosphates as substrates. This is DNA-directed RNA polymerase subunit Rpo10 from Thermoplasma volcanium (strain ATCC 51530 / DSM 4299 / JCM 9571 / NBRC 15438 / GSS1).